A 60-amino-acid chain; its full sequence is Cecropin-B type 2 (60 aa).

The signal sequence occupies residues 1–24 (MNFSKLFALVLLIGLVLLTGQTEA). At I58 the chain carries Isoleucine amide.

It belongs to the cecropin family.

The protein resides in the secreted. Cecropins have lytic and antibacterial activity against several Gram-positive and Gram-negative bacteria. The polypeptide is Cecropin-B type 2 (CECB2) (Aedes albopictus (Asian tiger mosquito)).